A 200-amino-acid chain; its full sequence is Recombination protein RecR (200 aa).

Residues C59–C74 form a C4-type zinc finger. A Toprim domain is found at S82 to P177.

This sequence belongs to the RecR family.

May play a role in DNA repair. It seems to be involved in an RecBC-independent recombinational process of DNA repair. It may act with RecF and RecO. This is Recombination protein RecR from Bifidobacterium adolescentis (strain ATCC 15703 / DSM 20083 / NCTC 11814 / E194a).